A 134-amino-acid polypeptide reads, in one-letter code: Profilin-1 (134 aa).

Belongs to the profilin family. In terms of assembly, occurs in many kinds of cells as a complex with monomeric actin in a 1:1 ratio.

It localises to the cytoplasm. It is found in the cytoskeleton. Binds to actin and affects the structure of the cytoskeleton. At high concentrations, profilin prevents the polymerization of actin, whereas it enhances it at low concentrations. By binding to PIP2, it inhibits the formation of IP3 and DG. The sequence is that of Profilin-1 (PRO1) from Nicotiana tabacum (Common tobacco).